The sequence spans 95 residues: Large ribosomal subunit protein bL27 (95 aa).

Residues 1–9 (MLKMNLQFF) constitute a propeptide that is removed on maturation.

This sequence belongs to the bacterial ribosomal protein bL27 family. In terms of processing, the N-terminus is cleaved by ribosomal processing cysteine protease Prp.

This Lachnoclostridium phytofermentans (strain ATCC 700394 / DSM 18823 / ISDg) (Clostridium phytofermentans) protein is Large ribosomal subunit protein bL27.